The chain runs to 122 residues: N(2)-fixation sustaining protein CowN (122 aa).

The protein belongs to the CowN family.

In terms of biological role, is required to sustain N(2)-dependent growth in the presence of low levels of carbon monoxide (CO). Probably acts by protecting the N(2) fixation ability of the nitrogenase complex, which is inactivated in the presence of CO. The protein is N(2)-fixation sustaining protein CowN of Azorhizobium caulinodans (strain ATCC 43989 / DSM 5975 / JCM 20966 / LMG 6465 / NBRC 14845 / NCIMB 13405 / ORS 571).